Here is a 266-residue protein sequence, read N- to C-terminus: Ribosomal RNA small subunit methyltransferase A (266 aa).

Asparagine 10, isoleucine 12, glycine 37, glutamate 58, aspartate 82, and asparagine 105 together coordinate S-adenosyl-L-methionine.

The protein belongs to the class I-like SAM-binding methyltransferase superfamily. rRNA adenine N(6)-methyltransferase family. RsmA subfamily.

The protein resides in the cytoplasm. The catalysed reaction is adenosine(1518)/adenosine(1519) in 16S rRNA + 4 S-adenosyl-L-methionine = N(6)-dimethyladenosine(1518)/N(6)-dimethyladenosine(1519) in 16S rRNA + 4 S-adenosyl-L-homocysteine + 4 H(+). Its function is as follows. Specifically dimethylates two adjacent adenosines (A1518 and A1519) in the loop of a conserved hairpin near the 3'-end of 16S rRNA in the 30S particle. May play a critical role in biogenesis of 30S subunits. This Mycoplasma mycoides subsp. mycoides SC (strain CCUG 32753 / NCTC 10114 / PG1) protein is Ribosomal RNA small subunit methyltransferase A.